The primary structure comprises 514 residues: AAA-ATPase ASD, mitochondrial (514 aa).

The chain crosses the membrane as a helical span at residues 7–24 (VWTNTGSALASLVFIYTI). Residue 250–257 (GPPGTGKS) coordinates ATP. Disordered stretches follow at residues 311–342 (GQRK…ENKG) and 467–514 (KEEA…TMKD). Basic and acidic residues-rich tracts occupy residues 331 to 342 (KQMKKDQGENKG) and 467 to 502 (KEEA…KEEK).

This sequence belongs to the AAA ATPase family. BCS1 subfamily. Mg(2+) serves as cofactor. Expressed in seeds, specifically in the embryo.

Its subcellular location is the mitochondrion membrane. The enzyme catalyses ATP + H2O = ADP + phosphate + H(+). Functionally, required to regulate morphology and anatomy during seed maturation. This chain is AAA-ATPase ASD, mitochondrial (AATP1), found in Arabidopsis thaliana (Mouse-ear cress).